A 317-amino-acid chain; its full sequence is 17-beta-hydroxysteroid dehydrogenase type 6 (317 aa).

Residues 1–17 (MWLYLAAFVGLYYLLHW) form the signal peptide. An NAD(+)-binding site is contributed by 33–57 (FITGCDSGFGNLLARQLDARGLRVL). N-linked (GlcNAc...) asparagine glycosylation occurs at N161. S164 contributes to the substrate binding site. The Proton acceptor role is filled by Y176. Residues N215 and N256 are each glycosylated (N-linked (GlcNAc...) asparagine).

The protein belongs to the short-chain dehydrogenases/reductases (SDR) family. As to expression, detected in liver and prostate (at protein level). Detected in adult liver, lung, brain, placenta, prostate, adrenal gland, testis, mammary gland, spleen, spinal cord and uterus. Detected in caudate nucleus, and at lower levels in amygdala, corpus callosum, hippocampus, substantia nigra and thalamus. Detected in fetal lung, liver and brain.

The protein resides in the microsome membrane. Its subcellular location is the early endosome membrane. The enzyme catalyses all-trans-retinol--[retinol-binding protein] + NAD(+) = all-trans-retinal--[retinol-binding protein] + NADH + H(+). It catalyses the reaction all-trans-retinol + NAD(+) = all-trans-retinal + NADH + H(+). The catalysed reaction is androsterone + NAD(+) = 5alpha-androstan-3,17-dione + NADH + H(+). It carries out the reaction testosterone + NAD(+) = androst-4-ene-3,17-dione + NADH + H(+). The enzyme catalyses 5alpha-androstane-3alpha,17beta-diol + NAD(+) = 17beta-hydroxy-5alpha-androstan-3-one + NADH + H(+). It catalyses the reaction 17beta-estradiol + NAD(+) = estrone + NADH + H(+). The catalysed reaction is 17beta-estradiol + NADP(+) = estrone + NADPH + H(+). It carries out the reaction 3alpha-hydroxy-5alpha-pregnan-20-one + NAD(+) = 5alpha-pregnane-3,20-dione + NADH + H(+). The enzyme catalyses 5alpha-androstane-3beta,17beta-diol + NAD(+) = 17beta-hydroxy-5alpha-androstan-3-one + NADH + H(+). It catalyses the reaction 3beta-hydroxy-5alpha-androstan-17-one + NAD(+) = 5alpha-androstan-3,17-dione + NADH + H(+). Functionally, NAD-dependent oxidoreductase with broad substrate specificity that shows both oxidative and reductive activity (in vitro). Has 17-beta-hydroxysteroid dehydrogenase activity towards various steroids (in vitro). Converts 5-alpha-androstan-3-alpha,17-beta-diol to androsterone and estradiol to estrone (in vitro). Has 3-alpha-hydroxysteroid dehydrogenase activity towards androsterone (in vitro). Has retinol dehydrogenase activity towards all-trans-retinol (in vitro). Can convert androsterone to epi-androsterone. Androsterone is first oxidized to 5-alpha-androstane-3,17-dione and then reduced to epi-andosterone. Can act on both C-19 and C-21 3-alpha-hydroxysteroids. The protein is 17-beta-hydroxysteroid dehydrogenase type 6 (HSD17B6) of Homo sapiens (Human).